We begin with the raw amino-acid sequence, 182 residues long: Probable nicotinate-nucleotide adenylyltransferase (182 aa).

Belongs to the NadD family.

It catalyses the reaction nicotinate beta-D-ribonucleotide + ATP + H(+) = deamido-NAD(+) + diphosphate. Its pathway is cofactor biosynthesis; NAD(+) biosynthesis; deamido-NAD(+) from nicotinate D-ribonucleotide: step 1/1. Its function is as follows. Catalyzes the reversible adenylation of nicotinate mononucleotide (NaMN) to nicotinic acid adenine dinucleotide (NaAD). In Aliarcobacter butzleri (strain RM4018) (Arcobacter butzleri), this protein is Probable nicotinate-nucleotide adenylyltransferase.